Consider the following 470-residue polypeptide: Argininosuccinate lyase (470 aa).

It belongs to the lyase 1 family. Argininosuccinate lyase subfamily.

The protein resides in the cytoplasm. It catalyses the reaction 2-(N(omega)-L-arginino)succinate = fumarate + L-arginine. It participates in amino-acid biosynthesis; L-arginine biosynthesis; L-arginine from L-ornithine and carbamoyl phosphate: step 3/3. The polypeptide is Argininosuccinate lyase (Leptospira interrogans serogroup Icterohaemorrhagiae serovar copenhageni (strain Fiocruz L1-130)).